A 312-amino-acid chain; its full sequence is MGLFNVTHPAFFLLTGIPGLESSHSWLSGPLCVMYAVALGGNTVILQAVRVEPSLHEPMYYFLSMLSFSDVAISMATLPTVLRTFCLNARNITFDACLIQMFLIHFFSMMESGILLAMSFDRYVAICDPLRYATVLTTEVIAAMGLGAAARSFITLFPLPFLIKRLPICRSNVLSHSYCLHPDMMRLACADISINSIYGLFVLVSTFGMDLFFIFLSYVLILRSVMATASREERLKALNTCVSHILAVLAFYVPMIGVSTVHRFGKHVPCYIHVLMSNVYLFVPPVLNPLIYSAKTKEIRRAIFRMFHHIKI.

The Extracellular segment spans residues 1-25 (MGLFNVTHPAFFLLTGIPGLESSHS). N-linked (GlcNAc...) asparagine glycosylation occurs at N5. Residues 26 to 46 (WLSGPLCVMYAVALGGNTVIL) traverse the membrane as a helical segment. The Cytoplasmic portion of the chain corresponds to 47–54 (QAVRVEPS). A helical membrane pass occupies residues 55 to 75 (LHEPMYYFLSMLSFSDVAISM). Residues 76–99 (ATLPTVLRTFCLNARNITFDACLI) are Extracellular-facing. A disulfide bridge connects residues C97 and C189. A helical membrane pass occupies residues 100–120 (QMFLIHFFSMMESGILLAMSF). Residues 121–139 (DRYVAICDPLRYATVLTTE) are Cytoplasmic-facing. Residues 140-160 (VIAAMGLGAAARSFITLFPLP) traverse the membrane as a helical segment. Topologically, residues 161–196 (FLIKRLPICRSNVLSHSYCLHPDMMRLACADISINS) are extracellular. A helical transmembrane segment spans residues 197–217 (IYGLFVLVSTFGMDLFFIFLS). Topologically, residues 218–237 (YVLILRSVMATASREERLKA) are cytoplasmic. The helical transmembrane segment at 238 to 258 (LNTCVSHILAVLAFYVPMIGV) threads the bilayer. Over 259–273 (STVHRFGKHVPCYIH) the chain is Extracellular. The chain crosses the membrane as a helical span at residues 274–294 (VLMSNVYLFVPPVLNPLIYSA). Topologically, residues 295–312 (KTKEIRRAIFRMFHHIKI) are cytoplasmic.

Belongs to the G-protein coupled receptor 1 family.

It localises to the cell membrane. Functionally, odorant receptor. This chain is Olfactory receptor 51I2 (OR51I2), found in Homo sapiens (Human).